We begin with the raw amino-acid sequence, 411 residues long: Glucose-1-phosphate adenylyltransferase (411 aa).

Alpha-D-glucose 1-phosphate contacts are provided by residues Gly162, Glu177 to Lys178, and Ser195.

Belongs to the bacterial/plant glucose-1-phosphate adenylyltransferase family. Homotetramer.

The catalysed reaction is alpha-D-glucose 1-phosphate + ATP + H(+) = ADP-alpha-D-glucose + diphosphate. It participates in glycan biosynthesis; glycogen biosynthesis. Involved in the biosynthesis of ADP-glucose, a building block required for the elongation reactions to produce glycogen. Catalyzes the reaction between ATP and alpha-D-glucose 1-phosphate (G1P) to produce pyrophosphate and ADP-Glc. This chain is Glucose-1-phosphate adenylyltransferase, found in Thermodesulfovibrio yellowstonii (strain ATCC 51303 / DSM 11347 / YP87).